The sequence spans 330 residues: ADP-L-glycero-D-manno-heptose-6-epimerase (330 aa).

Residues 11 to 12, 32 to 33, Gln39, Gln54, 75 to 79, and Asn92 each bind NADP(+); these read FI, DD, and QGACA. Tyr139 acts as the Proton acceptor in catalysis. NADP(+) is bound at residue Lys143. A substrate-binding site is contributed by Asn168. NADP(+) is bound by residues Val169 and Lys177. Lys177 serves as the catalytic Proton acceptor. Residues Arg179, His186, 200–203, Arg213, and Tyr292 contribute to the substrate site; that span reads FGEH.

It belongs to the NAD(P)-dependent epimerase/dehydratase family. HldD subfamily. As to quaternary structure, homopentamer. Requires NADP(+) as cofactor.

The enzyme catalyses ADP-D-glycero-beta-D-manno-heptose = ADP-L-glycero-beta-D-manno-heptose. It participates in nucleotide-sugar biosynthesis; ADP-L-glycero-beta-D-manno-heptose biosynthesis; ADP-L-glycero-beta-D-manno-heptose from D-glycero-beta-D-manno-heptose 7-phosphate: step 4/4. Functionally, catalyzes the interconversion between ADP-D-glycero-beta-D-manno-heptose and ADP-L-glycero-beta-D-manno-heptose via an epimerization at carbon 6 of the heptose. The protein is ADP-L-glycero-D-manno-heptose-6-epimerase of Pseudomonas paraeruginosa (strain DSM 24068 / PA7) (Pseudomonas aeruginosa (strain PA7)).